Reading from the N-terminus, the 797-residue chain is Plakophilin-3 (797 aa).

The disordered stretch occupies residues 58–81; the sequence is GQQSRHNGSAELDGSAESARGMPR. The residue at position 81 (Arg-81) is an Omega-N-methylarginine. Residues Ser-123, Ser-180, and Ser-183 each carry the phosphoserine modification. Position 195 is a phosphotyrosine (Tyr-195). Low complexity predominate over residues 219-228; the sequence is ASSGSSRAGG. The interval 219–241 is disordered; sequence ASSGSSRAGGLDWPEATEGPPSR. Ser-240 is subject to Phosphoserine. Thr-250 carries the phosphothreonine modification. The segment at 253 to 274 is disordered; that stretch reads RFQSSHRSRGGTGSVSGAGLEP. Arg-261 is modified (omega-N-methylarginine). The required for interaction with SFN stretch occupies residues 283–288; it reads SLSLSL. A phosphoserine mark is found at Ser-285, Ser-313, Ser-314, and Ser-331. The required for interaction with GSK3B stretch occupies residues 294-724; it reads LPDVRGLDSY…AEVLVNIIAV (431 aa). 8 ARM repeats span residues 305–348, 351–390, 393–432, 449–487, 491–536, 596–637, 645–684, and 689–730; these read GHRT…HRCY, AAAKKQARSLQAVPRLVKLFNHANQEVQRHATGAMRNLIY, VDNKLALVEENGIFELLRTLREQDDELRKNVTGILWNLSS, TDLVLSPLSGAGGPPLIQQNASEAEIFYNATGFLRNLSS, ATRQ…NLSY, PKGL…NITA, VLSRLALEQERILNPLLDRVRTADHNQLRSLTGLIRNLSR, and KDEM…NLVV. A required for binding to PKP2 mRNA region spans residues 516-797; sequence VGKCEDKSVE…GYRKEDFLGP (282 aa).

This sequence belongs to the beta-catenin family. Found in a complex composed of CDH1, RAP1A and PKP3; PKP3 acts as a scaffold protein within the complex, the complex is required for CDH1 localization to mature desmosome cell junctions. Interacts with FXR1; the interaction facilitates the binding of PKP3 to PKP2 mRNA. Interacts (via ARM repeats) with GSK3B; the interaction may be involved in PKP3 protein degradation. Interacts with hyperphosphorylated and hypophosphorylated RB1; the interaction inhibits RB1 interaction with and repression of the transcription factor E2F1, potentially via sequestering RB1 to the cytoplasm. Interacts with CDKN1A; the interaction sequesters CDKN1A to the cytoplasm thereby repressing its role as an inhibitor of CDK4- and CDK6-driven RB1 phosphorylation. Interacts (via N-terminus) with SFN; the interaction maintains the cytoplasmic pool of PKP3, facilitates PKP3 exchange at desmosomes and restricts PKP3 localization to existing desmosome cell junctions. Interacts (via N-terminus) with JUP; the interaction is required for PKP3 localization to desmosome cell-cell junctions. Post-translationally, phosphorylated at Ser-285 when localized to the cytoplasm, PKP3 at desmosome cell junctions is not phosphorylated. Phosphorylation at Try-195 by SRC is induced by reactive oxygen species and potentially acts as a release mechanism from desmosome cell-cell junctions. Expressed in all layers of the epidermis, but is most abundant in the basal layer (at protein level). Expressed in keratinocytes of the epidermis at birth (at protein level). Expressed in the anagen non-keratinized inner root sheath cuticle and hair cuticle (at protein level). Also expressed in the matrix, precursors of the inner root sheath and hair shaft lineages (at protein level). Expressed at apical membranes in the outer hair root sheath and basal layer keratinocytes (at protein level). Expressed in intestinal epithelial cells and lamina propria of the ileum (at protein level). Expressed in keratinocytes (at protein level).

Its subcellular location is the nucleus. The protein resides in the cell junction. The protein localises to the desmosome. It localises to the cytoplasm. It is found in the cell membrane. Its subcellular location is the adherens junction. Its function is as follows. A component of desmosome cell-cell junctions which are required for positive regulation of cellular adhesion. Required for the localization of DSG2, DSP and PKP2 to mature desmosome junctions. May also play a role in the maintenance of DSG3 protein abundance in keratinocytes. Required for the formation of DSP-containing desmosome precursors in the cytoplasm during desmosome assembly. Also regulates the accumulation of CDH1 to mature desmosome junctions, via cAMP-dependent signaling and its interaction with activated RAP1A. Positively regulates the stabilization of PKP2 mRNA and therefore protein abundance, via its interaction with FXR1, may also regulate the protein abundance of DSP via the same mechanism. May also regulate the protein abundance of the desmosome component PKP1. Required for the organization of desmosome junctions at intercellular borders between basal keratinocytes of the epidermis, as a result plays a role in maintenance of the dermal barrier and regulation of the dermal inflammatory response. Required during epidermal keratinocyte differentiation for cell adherence at tricellular cell-cell contacts, via regulation of the timely formation of adherens junctions and desmosomes in a calcium-dependent manner, and may also play a role in the organization of the intracellular actin fiber belt. Acts as a negative regulator of the inflammatory response in hematopoietic cells of the skin and intestine, via modulation of proinflammatory cytokine production. Important for epithelial barrier maintenance in the intestine to reduce intestinal permeability, thereby plays a role in protection from intestinal-derived endotoxemia. Required for the development of hair follicles, via a role in the regulation of inner root sheaf length, correct alignment and anterior-posterior polarity of hair follicles. Promotes proliferation and cell-cycle G1/S phase transition of keratinocytes. Promotes E2F1-driven transcription of G1/S phase promoting genes by acting to release E2F1 from its inhibitory interaction with RB1, via sequestering RB1 and CDKN1A to the cytoplasm and thereby increasing CDK4- and CDK6-driven phosphorylation of RB1. May act as a scaffold protein to facilitate MAPK phosphorylation of RPS6KA protein family members and subsequently promote downstream EGFR signaling. May play a role in the positive regulation of transcription of Wnt-mediated TCF-responsive target genes. This Mus musculus (Mouse) protein is Plakophilin-3 (Pkp3).